A 287-amino-acid polypeptide reads, in one-letter code: 2-dehydro-3-deoxyphosphooctonate aldolase (287 aa).

Belongs to the KdsA family.

It is found in the cytoplasm. The enzyme catalyses D-arabinose 5-phosphate + phosphoenolpyruvate + H2O = 3-deoxy-alpha-D-manno-2-octulosonate-8-phosphate + phosphate. Its pathway is carbohydrate biosynthesis; 3-deoxy-D-manno-octulosonate biosynthesis; 3-deoxy-D-manno-octulosonate from D-ribulose 5-phosphate: step 2/3. The protein operates within bacterial outer membrane biogenesis; lipopolysaccharide biosynthesis. This Rhodopseudomonas palustris (strain BisB5) protein is 2-dehydro-3-deoxyphosphooctonate aldolase.